The sequence spans 262 residues: tRNA (guanine-N(1)-)-methyltransferase (262 aa).

S-adenosyl-L-methionine is bound by residues Gly-113 and 137–142; that span reads IGDYVL.

Belongs to the RNA methyltransferase TrmD family. Homodimer.

The protein resides in the cytoplasm. It catalyses the reaction guanosine(37) in tRNA + S-adenosyl-L-methionine = N(1)-methylguanosine(37) in tRNA + S-adenosyl-L-homocysteine + H(+). Specifically methylates guanosine-37 in various tRNAs. This chain is tRNA (guanine-N(1)-)-methyltransferase, found in Saccharopolyspora erythraea (strain ATCC 11635 / DSM 40517 / JCM 4748 / NBRC 13426 / NCIMB 8594 / NRRL 2338).